Consider the following 295-residue polypeptide: Pyridoxal 5'-phosphate synthase subunit PdxS (295 aa).

D-ribose 5-phosphate is bound at residue Asp25. The Schiff-base intermediate with D-ribose 5-phosphate role is filled by Lys82. Gly154 serves as a coordination point for D-ribose 5-phosphate. Arg166 is a binding site for D-glyceraldehyde 3-phosphate. Residues Gly215 and 236-237 (GS) each bind D-ribose 5-phosphate.

It belongs to the PdxS/SNZ family. In terms of assembly, in the presence of PdxT, forms a dodecamer of heterodimers.

It catalyses the reaction aldehydo-D-ribose 5-phosphate + D-glyceraldehyde 3-phosphate + L-glutamine = pyridoxal 5'-phosphate + L-glutamate + phosphate + 3 H2O + H(+). The protein operates within cofactor biosynthesis; pyridoxal 5'-phosphate biosynthesis. Catalyzes the formation of pyridoxal 5'-phosphate from ribose 5-phosphate (RBP), glyceraldehyde 3-phosphate (G3P) and ammonia. The ammonia is provided by the PdxT subunit. Can also use ribulose 5-phosphate and dihydroxyacetone phosphate as substrates, resulting from enzyme-catalyzed isomerization of RBP and G3P, respectively. The polypeptide is Pyridoxal 5'-phosphate synthase subunit PdxS (Shouchella clausii (strain KSM-K16) (Alkalihalobacillus clausii)).